Reading from the N-terminus, the 521-residue chain is Cytochrome P450 52A9 (521 aa).

A heme-binding site is contributed by cysteine 468.

It belongs to the cytochrome P450 family. Requires heme as cofactor.

The protein resides in the membrane. Functionally, together with an NADPH cytochrome P450 the enzyme system catalyzes the terminal hydroxylation as the first step in the assimilation of alkanes and fatty acids. In Candida maltosa (Yeast), this protein is Cytochrome P450 52A9 (CYP52A9).